Consider the following 432-residue polypeptide: Adenylosuccinate synthetase (432 aa).

Residues glycine 13–lysine 19 and glycine 41–threonine 43 each bind GTP. Aspartate 14 acts as the Proton acceptor in catalysis. The Mg(2+) site is built by aspartate 14 and glycine 41. IMP contacts are provided by residues aspartate 14 to lysine 17, asparagine 39 to histidine 42, threonine 130, arginine 144, glutamine 225, threonine 240, and arginine 304. Histidine 42 serves as the catalytic Proton donor. Residue alanine 300–arginine 306 participates in substrate binding. GTP contacts are provided by residues arginine 306, lysine 332–aspartate 334, and serine 415–glycine 417.

It belongs to the adenylosuccinate synthetase family. As to quaternary structure, homodimer. Mg(2+) serves as cofactor.

The protein localises to the cytoplasm. The catalysed reaction is IMP + L-aspartate + GTP = N(6)-(1,2-dicarboxyethyl)-AMP + GDP + phosphate + 2 H(+). Its pathway is purine metabolism; AMP biosynthesis via de novo pathway; AMP from IMP: step 1/2. Plays an important role in the de novo pathway of purine nucleotide biosynthesis. Catalyzes the first committed step in the biosynthesis of AMP from IMP. This Photobacterium profundum (strain SS9) protein is Adenylosuccinate synthetase.